Consider the following 123-residue polypeptide: Large ribosomal subunit protein uL29x (123 aa).

The protein belongs to the universal ribosomal protein uL29 family.

This is Large ribosomal subunit protein uL29x (RPL35C) from Arabidopsis thaliana (Mouse-ear cress).